The primary structure comprises 145 residues: D-aminoacyl-tRNA deacylase (145 aa).

The Gly-cisPro motif, important for rejection of L-amino acids signature appears at 137–138; sequence GP.

Belongs to the DTD family. As to quaternary structure, homodimer.

Its subcellular location is the cytoplasm. The catalysed reaction is glycyl-tRNA(Ala) + H2O = tRNA(Ala) + glycine + H(+). It catalyses the reaction a D-aminoacyl-tRNA + H2O = a tRNA + a D-alpha-amino acid + H(+). Its function is as follows. An aminoacyl-tRNA editing enzyme that deacylates mischarged D-aminoacyl-tRNAs. Also deacylates mischarged glycyl-tRNA(Ala), protecting cells against glycine mischarging by AlaRS. Acts via tRNA-based rather than protein-based catalysis; rejects L-amino acids rather than detecting D-amino acids in the active site. By recycling D-aminoacyl-tRNA to D-amino acids and free tRNA molecules, this enzyme counteracts the toxicity associated with the formation of D-aminoacyl-tRNA entities in vivo and helps enforce protein L-homochirality. This is D-aminoacyl-tRNA deacylase from Carboxydothermus hydrogenoformans (strain ATCC BAA-161 / DSM 6008 / Z-2901).